Here is a 422-residue protein sequence, read N- to C-terminus: Receptor homology region, transmembrane domain- and RING domain-containing protein 3 (422 aa).

Positions 1–22 are cleaved as a signal peptide; sequence MNLVVLLILTLLLFIVSYVVDA. Topologically, residues 23 to 168 are lumenal; that stretch reads GQVILVDSNI…NTEDSVWSLY (146 aa). A glycan (N-linked (GlcNAc...) asparagine) is linked at asparagine 31. A disulfide bridge links cysteine 64 with cysteine 89. Residues 81-146 form the PA domain; the sequence is LVLIIRGGCS…RAGEMLKKYA (66 aa). The helical transmembrane segment at 169–189 threads the bilayer; that stretch reads ASIALILSLAIFCVMVTCVFF. Topologically, residues 190–422 are cytoplasmic; it reads YRYCSTIRNS…HFASAHSLPD (233 aa). Residues 232–274 form an RING-type; atypical zinc finger; that stretch reads CAICLEDYIVGDKLRVLPCSHKFHVACVDSWLISWRTFCPVCK. A disordered region spans residues 344–368; that stretch reads LRRQASPLQSSSQRSHLSMKSSHSL. The segment covering 349 to 368 has biased composition (polar residues); the sequence is SPLQSSSQRSHLSMKSSHSL.

It localises to the prevacuolar compartment membrane. It is found in the protein storage vacuole membrane. In terms of biological role, involved in the trafficking of vacuolar proteins. May function as a sorting receptor for protein trafficking to the protein storage vacuole (PSV). This is Receptor homology region, transmembrane domain- and RING domain-containing protein 3 (RMR3) from Arabidopsis thaliana (Mouse-ear cress).